A 37-amino-acid chain; its full sequence is Cytochrome b6-f complex subunit 5 (37 aa).

The helical transmembrane segment at 5–25 (FLFGIVLGLIPITLTGLFVTA) threads the bilayer.

Belongs to the PetG family. The 4 large subunits of the cytochrome b6-f complex are cytochrome b6, subunit IV (17 kDa polypeptide, PetD), cytochrome f and the Rieske protein, while the 4 small subunits are PetG, PetL, PetM and PetN. The complex functions as a dimer.

It is found in the plastid. The protein resides in the chloroplast thylakoid membrane. Component of the cytochrome b6-f complex, which mediates electron transfer between photosystem II (PSII) and photosystem I (PSI), cyclic electron flow around PSI, and state transitions. PetG is required for either the stability or assembly of the cytochrome b6-f complex. This Phalaenopsis aphrodite subsp. formosana (Moth orchid) protein is Cytochrome b6-f complex subunit 5.